Reading from the N-terminus, the 345-residue chain is 3-isopropylmalate dehydrogenase (345 aa).

Residues arginine 94, arginine 104, arginine 130, and aspartate 215 each contribute to the substrate site. Mg(2+) is bound by residues aspartate 215, aspartate 239, and aspartate 243. 273 to 285 (GSAPDIAGKGIAN) contacts NAD(+).

The protein belongs to the isocitrate and isopropylmalate dehydrogenases family. LeuB type 1 subfamily. As to quaternary structure, homodimer. Requires Mg(2+) as cofactor. It depends on Mn(2+) as a cofactor.

Its subcellular location is the cytoplasm. The catalysed reaction is (2R,3S)-3-isopropylmalate + NAD(+) = 4-methyl-2-oxopentanoate + CO2 + NADH. It functions in the pathway amino-acid biosynthesis; L-leucine biosynthesis; L-leucine from 3-methyl-2-oxobutanoate: step 3/4. Catalyzes the oxidation of 3-carboxy-2-hydroxy-4-methylpentanoate (3-isopropylmalate) to 3-carboxy-4-methyl-2-oxopentanoate. The product decarboxylates to 4-methyl-2 oxopentanoate. This chain is 3-isopropylmalate dehydrogenase (leuB), found in Lactococcus lactis subsp. lactis (strain IL1403) (Streptococcus lactis).